A 165-amino-acid polypeptide reads, in one-letter code: Iron sulfur cluster assembly protein 1, mitochondrial (165 aa).

A mitochondrion-targeting transit peptide spans 1–27 (MLPVITRFARPALMAIRPVNAMGVLRA). Residues 132-136 (LPPVK) are SSQ1 binding region.

This sequence belongs to the NifU family. As to quaternary structure, homodimer, but can exist as monomers or trimers. Oligomerization may be regulated by Zn(2+) availability. Component of the core Fe-S cluster (ISC) assembly machinery. Interacts with YFH1/frataxin with a 1 to 1 stoichiometry; the interaction is direct. Interacts with the mitochondrial co-chaperones JAC1 and SSQ1. Interacts with NFS1. Interacts with YAH1/ferredoxin; interacts with the reduced form. Requires [2Fe-2S] cluster as cofactor. Zn(2+) is required as a cofactor.

The protein resides in the mitochondrion matrix. The protein operates within cofactor biosynthesis; iron-sulfur cluster biosynthesis. Functionally, scaffold protein for the de novo synthesis of iron-sulfur (Fe-S) clusters within mitochondria, which is required for maturation of both mitochondrial and cytoplasmic [2Fe-2S] and [4Fe-4S] proteins. First, a [2Fe-2S] cluster is transiently assembled on the scaffold proteins ISU1 and ISU2. In a second step, the cluster is released from ISU1/ISU2, transferred to glutaredoxin GRX5, followed by the formation of mitochondrial [2Fe-2S] proteins, the synthesis of [4Fe-4S] clusters and their target-specific insertion into the recipient apoproteins. Cluster assembly on ISU1/ISU2 depends on the function of the cysteine desulfurase complex NFS1-ISD11, which serves as the sulfur donor for cluster synthesis, the iron-binding protein frataxin (YFH1) as the putative iron donor, and the electron transfer chain comprised of ferredoxin reductase ARH1 and ferredoxin YAH1, which receive their electrons from NADH. Fe-S cluster release from ISU1/ISU2 is achieved by interaction with the Hsp70 chaperone SSQ1, assisted by the DnaJ-like co-chaperone JAC1 and the nucleotide exchange factor MGE1. ISU1 is the major isoform in yeast, while ISU2 is not detectable in cells grown to stationary phase. Also involved in production of a sulfur precursor required for thiolation of cytoplasmic tRNAs. This Saccharomyces cerevisiae (strain ATCC 204508 / S288c) (Baker's yeast) protein is Iron sulfur cluster assembly protein 1, mitochondrial.